A 354-amino-acid polypeptide reads, in one-letter code: 3-dehydroquinate synthase (354 aa).

NAD(+) contacts are provided by residues 100 to 104, 124 to 125, Lys-136, Lys-145, and 163 to 166; these read GATGD, TT, and FLKT. Zn(2+) contacts are provided by Glu-178, His-242, and His-256.

It belongs to the sugar phosphate cyclases superfamily. Dehydroquinate synthase family. Requires Co(2+) as cofactor. Zn(2+) is required as a cofactor. It depends on NAD(+) as a cofactor.

The protein resides in the cytoplasm. It carries out the reaction 7-phospho-2-dehydro-3-deoxy-D-arabino-heptonate = 3-dehydroquinate + phosphate. It functions in the pathway metabolic intermediate biosynthesis; chorismate biosynthesis; chorismate from D-erythrose 4-phosphate and phosphoenolpyruvate: step 2/7. In terms of biological role, catalyzes the conversion of 3-deoxy-D-arabino-heptulosonate 7-phosphate (DAHP) to dehydroquinate (DHQ). The sequence is that of 3-dehydroquinate synthase from Staphylococcus aureus (strain NCTC 8325 / PS 47).